The primary structure comprises 1006 residues: uncharacterized protein (1006 aa).

Positions 326-371 are disordered; that stretch reads EMEKKRPRSPELVPKKIVMEKERPSSPDSEAEEREHNLRIEKERHQ. Basic and acidic residues-rich tracts occupy residues 338-350 and 358-371; these read VPKK…ERPS and EREH…ERHQ. Coiled coils occupy residues 358 to 473 and 756 to 782; these read EREH…ARLA and EVQK…AFGR.

This is an uncharacterized protein from Caenorhabditis elegans.